Reading from the N-terminus, the 156-residue chain is Small ribosomal subunit protein uS7 (156 aa).

This sequence belongs to the universal ribosomal protein uS7 family. Part of the 30S ribosomal subunit. Contacts proteins S9 and S11.

In terms of biological role, one of the primary rRNA binding proteins, it binds directly to 16S rRNA where it nucleates assembly of the head domain of the 30S subunit. Is located at the subunit interface close to the decoding center, probably blocks exit of the E-site tRNA. This Rhizorhabdus wittichii (strain DSM 6014 / CCUG 31198 / JCM 15750 / NBRC 105917 / EY 4224 / RW1) (Sphingomonas wittichii) protein is Small ribosomal subunit protein uS7.